Consider the following 274-residue polypeptide: Elongation factor Ts (274 aa).

Residues 82 to 85 (TDFV) form an involved in Mg(2+) ion dislocation from EF-Tu region.

Belongs to the EF-Ts family.

It localises to the cytoplasm. Its function is as follows. Associates with the EF-Tu.GDP complex and induces the exchange of GDP to GTP. It remains bound to the aminoacyl-tRNA.EF-Tu.GTP complex up to the GTP hydrolysis stage on the ribosome. The polypeptide is Elongation factor Ts (Flavobacterium psychrophilum (strain ATCC 49511 / DSM 21280 / CIP 103535 / JIP02/86)).